The following is a 1235-amino-acid chain: Bromodomain-containing protein 8 (1235 aa).

Lysine 85 is modified (N6-acetyllysine). Residues 97–171 (VRKLTAERVE…ATDAAYQARQ (75 aa)) are a coiled coil. A Phosphothreonine modification is found at arginine 124. 2 positions are modified to phosphoserine: leucine 128 and aspartate 144. Residues 186-205 (RSPIDSASPGGDYPLGDLTP) are disordered. Alanine 264 carries the phosphothreonine modification. Phosphoserine is present on residues serine 268, serine 284, serine 383, and serine 387. A Glycyl lysine isopeptide (Lys-Gly) (interchain with G-Cter in SUMO2) cross-link involves residue lysine 469. Residue lysine 481 is modified to N6-acetyllysine; alternate. Lysine 481 participates in a covalent cross-link: Glycyl lysine isopeptide (Lys-Gly) (interchain with G-Cter in SUMO1); alternate. Residue lysine 481 forms a Glycyl lysine isopeptide (Lys-Gly) (interchain with G-Cter in SUMO2); alternate linkage. Glycyl lysine isopeptide (Lys-Gly) (interchain with G-Cter in SUMO2) cross-links involve residues lysine 509 and lysine 575. Residues 551-597 (TAAGEIVEADVAIGKGDETPLTNVKTEASPESMLSPSHGSNPIEDPL) form a disordered region. Phosphoserine is present on serine 579. Residue lysine 612 forms a Glycyl lysine isopeptide (Lys-Gly) (interchain with G-Cter in SUMO2) linkage. Residues serine 621, serine 637, and serine 641 each carry the phosphoserine modification. Positions 621–672 (SQIKDAPGEDEEEDGVSEAASLEEPKEEDQGEGYLSEMDNEPPVSESDDGFS) are disordered. Residues 706-811 (IQAQKIWKKA…RDVLEQIQQF (106 aa)) enclose the Bromo 1 domain. Disordered regions lie at residues 827 to 848 (AKSL…DSVP), 903 to 940 (ETED…AARK), and 966 to 999 (ESSE…ETEE). The span at 831–846 (RGRDSTRKQDASEKDS) shows a compositional bias: basic and acidic residues. Residues 905–915 (EDPEAEELEES) show a composition bias toward acidic residues. Leucine 924 bears the Phosphoserine mark. Residues 979-999 (QEGREIKASEGERELCRETEE) show a composition bias toward basic and acidic residues. Residues 1099–1207 (DDPVQDHLLF…QEVLEQIQVL (109 aa)) enclose the Bromo 2 domain.

In terms of assembly, component of the NuA4 histone acetyltransferase complex which contains the catalytic subunit KAT5/TIP60 and the subunits EP400, TRRAP/PAF400, BRD8/SMAP, EPC1, DMAP1/DNMAP1, RUVBL1/TIP49, RUVBL2, ING3, actin, ACTL6A/BAF53A, MORF4L1/MRG15, MORF4L2/MRGX, MRGBP, YEATS4/GAS41, VPS72/YL1 and MEAF6. The NuA4 complex interacts with MYC and the adenovirus E1A protein. Component of a NuA4-related complex which contains EP400, TRRAP/PAF400, SRCAP, BRD8/SMAP, EPC1, DMAP1/DNMAP1, RUVBL1/TIP49, RUVBL2, actin, ACTL6A/BAF53A, VPS72 and YEATS4/GAS41. BRD8 isoform 2 interacts with RXRA/NR2B1 and THRB/ERBA2. Component of a SWR1-like complex. Expressed in adipose tissue, brain, heart, kidney, liver, lung, pancreas, placenta and skeletal muscle.

Its subcellular location is the nucleus. In terms of biological role, may act as a coactivator during transcriptional activation by hormone-activated nuclear receptors (NR). Isoform 2 stimulates transcriptional activation by AR/DHTR, ESR1/NR3A1, RXRA/NR2B1 and THRB/ERBA2. At least isoform 1 and isoform 2 are components of the NuA4 histone acetyltransferase (HAT) complex which is involved in transcriptional activation of select genes principally by acetylation of nucleosomal histones H4 and H2A. This modification may both alter nucleosome - DNA interactions and promote interaction of the modified histones with other proteins which positively regulate transcription. This complex may be required for the activation of transcriptional programs associated with oncogene and proto-oncogene mediated growth induction, tumor suppressor mediated growth arrest and replicative senescence, apoptosis, and DNA repair. NuA4 may also play a direct role in DNA repair when recruited to sites of DNA damage. Component of a SWR1-like complex that specifically mediates the removal of histone H2A.Z/H2AZ1 from the nucleosome. This chain is Bromodomain-containing protein 8 (BRD8), found in Homo sapiens (Human).